A 237-amino-acid chain; its full sequence is uncharacterized protein (237 aa).

This is an uncharacterized protein from Schizosaccharomyces pombe (strain 972 / ATCC 24843) (Fission yeast).